Reading from the N-terminus, the 127-residue chain is Evasin-4 (127 aa).

An N-terminal signal peptide occupies residues 1-23 (MAFKYWFVFAAVLYARQWLSTKC). 4 disulfides stabilise this stretch: Cys50/Cys69, Cys65/Cys112, Cys86/Cys117, and Cys107/Cys126. N-linked (GlcNAc...) asparagine glycosylation is found at Asn54, Asn64, Asn70, Asn77, Asn83, Asn106, and Asn114.

This sequence belongs to the evasin C8 family. As to quaternary structure, monomer.

Its subcellular location is the secreted. In terms of biological role, salivary chemokine-binding protein which has chemokine-neutralizing activity and binds to host chemokines CCL1, CCL3, CCL5, CCL7, CCL8, CCL11, CCL14, CCL15, CCL16, CCL17, CCL18, CCL19, CCL21, CCL22, CCL23, CCL24, CCL25 and CCL26 with nanomolar affinity. Binds to CCL3 and CCL5 with 1:1 stoichiometry. Although binding to CCL25 is observed, does not inhibit CCL25-induced chemotaxis. Has been shown to reduce cardiac injury and inflammation in mice through its anti-CCL5 activity. This is Evasin-4 from Rhipicephalus sanguineus (Brown dog tick).